The following is a 726-amino-acid chain: Probable dipeptidyl-peptidase 5 (726 aa).

Positions 1-19 (MGALQWLSITAAAASAVSA) are cleaved as a signal peptide. 6 N-linked (GlcNAc...) asparagine glycosylation sites follow: N97, N153, N259, N398, N453, and N529. S564 (charge relay system) is an active-site residue. N-linked (GlcNAc...) asparagine glycosylation occurs at N611. Catalysis depends on charge relay system residues D647 and H679.

This sequence belongs to the peptidase S9C family.

It is found in the secreted. Its function is as follows. Extracellular dipeptidyl-peptidase which removes N-terminal dipeptides sequentially from polypeptides having unsubstituted N-termini. The polypeptide is Probable dipeptidyl-peptidase 5 (dpp5) (Aspergillus niger).